Here is a 206-residue protein sequence, read N- to C-terminus: LOB domain-containing protein 2 (206 aa).

The tract at residues 1-20 (MMQRNSNNTSITSNISNNSS) is disordered. The region spanning 23 to 123 (QACASCKHQR…KSLVHNQPLI (101 aa)) is the LOB domain.

The protein belongs to the LOB domain-containing protein family.

The polypeptide is LOB domain-containing protein 2 (LBD2) (Arabidopsis thaliana (Mouse-ear cress)).